A 399-amino-acid chain; its full sequence is Beta-1,4-galactosyltransferase 1 (399 aa).

Topologically, residues 1-24 (MRFREQFLGGSAAMPGATLQRACR) are cytoplasmic. Residues 25–44 (LLVAVCALHLGVTLVYYLSG) traverse the membrane as a helical; Signal-anchor for type II membrane protein segment. At 45–399 (RDLSRLPQLV…QITVDIGTPR (355 aa)) the chain is on the lumenal side. The segment at 61–113 (QGGTNGAAASKQPPGEQRPRGARPPPPLGVSPKPRPGLDSSPGAASGPGLKSN) is disordered. A compositionally biased stretch (pro residues) spans 82–95 (ARPPPPLGVSPKPR). N-linked (GlcNAc...) asparagine glycosylation occurs at asparagine 113. A disulfide bond links cysteine 131 and cysteine 173. UDP-alpha-D-galactose-binding positions include 184–188 (PFRNR), 223–225 (FNR), 250–251 (VD), and tryptophan 311. A disulfide bridge links cysteine 244 with cysteine 263. Aspartate 251 contributes to the Mn(2+) binding site. 313–316 (GEDD) contributes to the N-acetyl-D-glucosamine binding site. Mn(2+) is bound at residue histidine 344. Position 344-346 (344-346 (HSR)) interacts with UDP-alpha-D-galactose. An N-acetyl-D-glucosamine-binding site is contributed by arginine 356.

It belongs to the glycosyltransferase 7 family. In terms of assembly, homodimer; and heterodimer with alpha-lactalbumin to form lactose synthase. Interacts (via N-terminal cytoplasmic domain) with UBE2Q1 (via N-terminus); the interaction is direct. Mn(2+) serves as cofactor. The soluble form derives from the membrane forms by proteolytic processing.

The protein localises to the golgi apparatus. Its subcellular location is the golgi stack membrane. The protein resides in the cell membrane. It is found in the cell surface. It localises to the cell projection. The protein localises to the filopodium. Its subcellular location is the secreted. It catalyses the reaction D-glucose + UDP-alpha-D-galactose = lactose + UDP + H(+). The enzyme catalyses an N-acetyl-beta-D-glucosaminyl derivative + UDP-alpha-D-galactose = a beta-D-galactosyl-(1-&gt;4)-N-acetyl-beta-D-glucosaminyl derivative + UDP + H(+). The catalysed reaction is N-acetyl-D-glucosamine + UDP-alpha-D-galactose = beta-D-galactosyl-(1-&gt;4)-N-acetyl-D-glucosamine + UDP + H(+). It carries out the reaction a beta-D-GlcNAc-(1-&gt;3)-beta-D-Gal-(1-&gt;4)-beta-D-Glc-(1&lt;-&gt;1)-Cer(d18:1(4E)) + UDP-alpha-D-galactose = a neolactoside nLc4Cer(d18:1(4E)) + UDP + H(+). It catalyses the reaction a beta-D-glucosylceramide + UDP-alpha-D-galactose = a beta-D-galactosyl-(1-&gt;4)-beta-D-glucosyl-(1&lt;-&gt;1)-ceramide + UDP + H(+). The enzyme catalyses a neolactoside IV(3)-beta-GlcNAc-nLc4Cer + UDP-alpha-D-galactose = a neolactoside nLc6Cer + UDP + H(+). The protein operates within protein modification; protein glycosylation. Functionally, the Golgi complex form catalyzes the production of lactose in the lactating mammary gland and could also be responsible for the synthesis of complex-type N-linked oligosaccharides in many glycoproteins as well as the carbohydrate moieties of glycolipids. In terms of biological role, the cell surface form functions as a recognition molecule during a variety of cell to cell and cell to matrix interactions, as those occurring during development and egg fertilization, by binding to specific oligosaccharide ligands on opposing cells or in the extracellular matrix. The secreted form is responsible for the synthesis of complex-type to N-linked oligosaccharides in many glycoproteins as well as the carbohydrate moieties of glycolipids. In Mus musculus (Mouse), this protein is Beta-1,4-galactosyltransferase 1.